We begin with the raw amino-acid sequence, 354 residues long: Lysine racemase (354 aa).

Lys36 is modified (N6-(pyridoxal phosphate)lysine).

It belongs to the alanine racemase family. In terms of assembly, homodimer. Requires pyridoxal 5'-phosphate as cofactor.

It carries out the reaction L-lysine = D-lysine. The enzyme catalyses L-ornithine = D-ornithine. Its pathway is cell wall biogenesis; peptidoglycan biosynthesis. Its function is as follows. Catalyzes the interconversion of D-lysine and L-lysine. Has also high activity toward ornithine, and weaker activity toward alanine. Contributes to production of D-lysine and D-alanine for use as peptidoglycan components. The chain is Lysine racemase from Thermotoga maritima (strain ATCC 43589 / DSM 3109 / JCM 10099 / NBRC 100826 / MSB8).